A 196-amino-acid chain; its full sequence is MTALTLLMILSAYLLGSISSAVVICRLWGLPDPRKEGSGNPGATNVYRVGGKIPALLTLWFDVLKGMVPVWGSYFLGIEPFFLGLIAVAACLGHIFPLYFHFRGGKAVATALGAMFPVAWEMALLLIATWLLVFRVSRVSSLAALVTVCLAPFYAYWIKPQYTVPVIMISLLILWRHQANILRLSSGEEKAFKRRR.

4 consecutive transmembrane segments (helical) span residues 4-24, 80-100, 114-134, and 155-175; these read LTLL…AVVI, PFFL…PLYF, AMFP…LLVF, and AYWI…LILW.

It belongs to the PlsY family. In terms of assembly, probably interacts with PlsX.

Its subcellular location is the cell inner membrane. The enzyme catalyses an acyl phosphate + sn-glycerol 3-phosphate = a 1-acyl-sn-glycero-3-phosphate + phosphate. The protein operates within lipid metabolism; phospholipid metabolism. Functionally, catalyzes the transfer of an acyl group from acyl-phosphate (acyl-PO(4)) to glycerol-3-phosphate (G3P) to form lysophosphatidic acid (LPA). This enzyme utilizes acyl-phosphate as fatty acyl donor, but not acyl-CoA or acyl-ACP. The polypeptide is Glycerol-3-phosphate acyltransferase (Idiomarina loihiensis (strain ATCC BAA-735 / DSM 15497 / L2-TR)).